The sequence spans 415 residues: Adipocyte plasma membrane-associated protein (415 aa).

Residues 1–29 (MSEADGLRQRRPLRPQVVTDDGQVPEVKE) form a disordered region. The residue at position 2 (serine 2) is an N-acetylserine. The Cytoplasmic portion of the chain corresponds to 2–39 (SEADGLRQRRPLRPQVVTDDGQVPEVKEGSSFSGRVFR). A Phosphothreonine modification is found at threonine 19. The chain crosses the membrane as a helical; Signal-anchor for type II membrane protein span at residues 40 to 60 (MTFLMLAVSLAIPLLGAMMLL). Residues 61-415 (ESPIDPQSFS…FICRLSLQSI (355 aa)) are Extracellular-facing. Asparagine 159 carries N-linked (GlcNAc...) asparagine glycosylation.

This sequence belongs to the strictosidine synthase family. Glycosylated in vitro. Strongly expressed in adipose tissue. Highly expressed in liver, heart, and kidney. Expressed at intermediate level in brain and lung. Weakly expressed in spleen, skeletal muscle and testis.

It is found in the membrane. In terms of biological role, exhibits strong arylesterase activity with beta-naphthyl acetate and phenyl acetate. May play a role in adipocyte differentiation. In Mus musculus (Mouse), this protein is Adipocyte plasma membrane-associated protein (Apmap).